The sequence spans 224 residues: Putative MgpC-like protein MPN_150 (224 aa).

Belongs to the MgpC family.

The protein is Putative MgpC-like protein MPN_150 of Mycoplasma pneumoniae (strain ATCC 29342 / M129 / Subtype 1) (Mycoplasmoides pneumoniae).